The primary structure comprises 341 residues: Methionine import ATP-binding protein MetN 2 (341 aa).

In terms of domain architecture, ABC transporter spans 2 to 241; that stretch reads IEASELTKVY…PKAPLTQEFI (240 aa). ATP is bound at residue 38–45; sequence GYSGAGKS.

Belongs to the ABC transporter superfamily. Methionine importer (TC 3.A.1.24) family. The complex is composed of two ATP-binding proteins (MetN), two transmembrane proteins (MetI) and a solute-binding protein (MetQ).

It localises to the cell membrane. The enzyme catalyses L-methionine(out) + ATP + H2O = L-methionine(in) + ADP + phosphate + H(+). It catalyses the reaction D-methionine(out) + ATP + H2O = D-methionine(in) + ADP + phosphate + H(+). In terms of biological role, part of the ABC transporter complex MetNIQ involved in methionine import. Responsible for energy coupling to the transport system. In Shouchella clausii (strain KSM-K16) (Alkalihalobacillus clausii), this protein is Methionine import ATP-binding protein MetN 2.